Reading from the N-terminus, the 709-residue chain is Twinkle homolog protein, chloroplastic/mitochondrial (709 aa).

A chloroplast and mitochondrion-targeting transit peptide spans Met1–Ser16. The 106-residue stretch at Ser280–Asp385 folds into the Toprim domain. The Mg(2+) site is built by Glu286, Asp348, and Asp350. The 269-residue stretch at Thr430–Pro698 folds into the SF4 helicase domain. Gly460–Ser467 provides a ligand contact to ATP.

The cofactor is Mg(2+). In terms of tissue distribution, expressed in young leaves and shoot apex tissues. Detected in developing tissues such as cotyledons, sepals, pistils and inflorescences. Nearly undetectable in mature leaves.

Its subcellular location is the plastid. The protein localises to the chloroplast. The protein resides in the mitochondrion. It carries out the reaction ATP + H2O = ADP + phosphate + H(+). Functionally, has both DNA primase and DNA helicase activities and may be involved in organelle DNA replication. Capable of producing RNA primers of 9 to 18 bases from a single-stranded DNA template. In Arabidopsis thaliana (Mouse-ear cress), this protein is Twinkle homolog protein, chloroplastic/mitochondrial.